A 230-amino-acid chain; its full sequence is ATP synthase subunit a (230 aa).

6 helical membrane passes run 16 to 36 (LVLF…WLSI), 73 to 93 (WVSA…LGLL), 106 to 126 (TYSI…YLAF), 142 to 162 (LIPF…IALG), 165 to 185 (LAAN…AIWT), and 192 to 212 (IASI…GVAC).

It belongs to the ATPase A chain family. F-type ATPases have 2 components, CF(1) - the catalytic core - and CF(0) - the membrane proton channel. CF(1) has five subunits: alpha(3), beta(3), gamma(1), delta(1), epsilon(1). CF(0) has three main subunits: a, b and c.

It is found in the mitochondrion inner membrane. Its function is as follows. Mitochondrial membrane ATP synthase (F(1)F(0) ATP synthase or Complex V) produces ATP from ADP in the presence of a proton gradient across the membrane which is generated by electron transport complexes of the respiratory chain. F-type ATPases consist of two structural domains, F(1) - containing the extramembraneous catalytic core and F(0) - containing the membrane proton channel, linked together by a central stalk and a peripheral stalk. During catalysis, ATP synthesis in the catalytic domain of F(1) is coupled via a rotary mechanism of the central stalk subunits to proton translocation. Key component of the proton channel; it may play a direct role in the translocation of protons across the membrane. This chain is ATP synthase subunit a (ATP6), found in Patiria pectinifera (Starfish).